We begin with the raw amino-acid sequence, 326 residues long: Prenyl transferase nodC (326 aa).

Residues 8–28 (LAAVLFSALFSLGVILVHLPW) form a helical membrane-spanning segment. His95 lines the isopentenyl diphosphate pocket. 2 residues coordinate Mg(2+): Asp102 and Asp106. Arg111 provides a ligand contact to dimethylallyl diphosphate. The N-linked (GlcNAc...) asparagine glycan is linked to Asn139. Lys195 is a binding site for dimethylallyl diphosphate. N-linked (GlcNAc...) asparagine glycosylation is present at Asn210.

This sequence belongs to the FPP/GGPP synthase family.

The protein localises to the membrane. It participates in secondary metabolite biosynthesis. In terms of biological role, cytochrome P450 monooxygenase; part of the gene cluster that mediates the biosynthesis of the indole diterpenes nodulisporic acids (NA). Nodulisporic acid A (NAA) and its chemically modified derivatives are of particular significance because of their highly potent insecticidal activity against blood-feeding arthropods and lack of observable adverse effects on mammals, in particular the tremogenicity associated with the paspaline-derived IDTs is not observed. The geranylgeranyl diphosphate (GGPP) synthase ggs1, localized outside of the cluster, is proposed to catalyze the first step in nodulisporic acid biosynthesis via conversion of farnesyl pyrophosphate and isopentyl pyrophosphate into geranylgeranyl pyrophosphate (GGPP). Condensation of indole-3-glycerol phosphate with GGPP by the prenyl transferase nodC then forms 3-geranylgeranylindole (3-GGI). Epoxidation by the FAD-dependent monooxygenase nodM leads to a single-epoxidized-GGI that is substrate of the terpene cyclase nodB for cyclization to yield emindole SB. The terminal methyl carbon, C28, of emindole SB is then oxidized by the cytochrome P450 monooxygenase nodW to produce nodulisporic acid F (NAF), the pentacyclic core of NAA. NAF is converted to nodulisporic acid E (NAE) via prenylation. This step is probably performed by one of the indole diterpene prenyltransferases nodD1 or nodD2. Several oxidation steps performed by the FAD-linked oxidoreductase nodO and one of the cytochrome P450 monooxygenase nodR, nodX or nodZ further convert NAE to nodulisporic acid D (NAD). NAD is substrate of cytochrome P450 monooxygenase nodJ to produce the precursor of nodulisporic acid C (NAC), converted to NAC by one of the indole diterpene prenyltransferases nodD1 or nodD2. The FAD-dependent monooxygenase nodY2 then oxidizes NAC to nodulisporic acid B (NAB). Finally NAB is converted to NAA by one of the cytochrome P450 monooxygenases nodR, nodX or nodZ. The protein is Prenyl transferase nodC of Hypoxylon pulicicidum.